Consider the following 158-residue polypeptide: Non-secretory ribonuclease (158 aa).

The signal sequence occupies residues Met-1–Ala-27. Residue His-42 is the Proton acceptor of the active site. A 3'-nitrotyrosine modification is found at Tyr-60. Lys-65 to Thr-69 is a substrate binding site. N-linked (GlcNAc...) asparagine glycosylation is found at Asn-86, Asn-92, and Asn-111. His-153 (proton donor) is an active-site residue.

The protein belongs to the pancreatic ribonuclease family. In terms of assembly, interacts with and forms a tight 1:1 complex with RNH1. Dimerization of two such complexes may occur.

It localises to the lysosome. The protein resides in the cytoplasmic granule. It catalyses the reaction an [RNA] containing cytidine + H2O = an [RNA]-3'-cytidine-3'-phosphate + a 5'-hydroxy-ribonucleotide-3'-[RNA].. The catalysed reaction is an [RNA] containing uridine + H2O = an [RNA]-3'-uridine-3'-phosphate + a 5'-hydroxy-ribonucleotide-3'-[RNA].. Its function is as follows. This is a non-secretory ribonuclease. It is a pyrimidine specific nuclease with a slight preference for U. Cytotoxin and helminthotoxin. Possesses a wide variety of biological activities. The chain is Non-secretory ribonuclease (RNASE2) from Callithrix jacchus (White-tufted-ear marmoset).